Reading from the N-terminus, the 540-residue chain is Phosphoenolpyruvate carboxykinase (ATP) (540 aa).

Arg-65 lines the substrate pocket. N6-acetyllysine is present on Lys-87. Substrate is bound by residues Tyr-207 and Lys-213. ATP is bound by residues Lys-213, His-232, and 248–256 (GLSGTGKTT). Mn(2+) contacts are provided by Lys-213 and His-232. Mn(2+) is bound at residue Asp-269. ATP is bound by residues Glu-297, Arg-333, 449-450 (RI), and Thr-455. Arg-333 contributes to the substrate binding site. At Lys-523 the chain carries N6-acetyllysine.

The protein belongs to the phosphoenolpyruvate carboxykinase (ATP) family. Monomer. It depends on Mn(2+) as a cofactor.

Its subcellular location is the cytoplasm. The enzyme catalyses oxaloacetate + ATP = phosphoenolpyruvate + ADP + CO2. The protein operates within carbohydrate biosynthesis; gluconeogenesis. Functionally, involved in the gluconeogenesis. Catalyzes the conversion of oxaloacetate (OAA) to phosphoenolpyruvate (PEP) through direct phosphoryl transfer between the nucleoside triphosphate and OAA. This is Phosphoenolpyruvate carboxykinase (ATP) from Escherichia coli O7:K1 (strain IAI39 / ExPEC).